We begin with the raw amino-acid sequence, 248 residues long: DNA repair protein RecO (248 aa).

Belongs to the RecO family.

In terms of biological role, involved in DNA repair and RecF pathway recombination. This Oleidesulfovibrio alaskensis (strain ATCC BAA-1058 / DSM 17464 / G20) (Desulfovibrio alaskensis) protein is DNA repair protein RecO.